The sequence spans 189 residues: GMP synthase [glutamine-hydrolyzing] subunit A (189 aa).

Residues 1–189 (MIVILNNGGQ…CKKCGFEFEE (189 aa)) enclose the Glutamine amidotransferase type-1 domain. Cys-76 acts as the Nucleophile in catalysis. Active-site residues include His-163 and Glu-165.

As to quaternary structure, heterodimer composed of a glutamine amidotransferase subunit (A) and a GMP-binding subunit (B).

The enzyme catalyses XMP + L-glutamine + ATP + H2O = GMP + L-glutamate + AMP + diphosphate + 2 H(+). It participates in purine metabolism; GMP biosynthesis; GMP from XMP (L-Gln route): step 1/1. Its function is as follows. Catalyzes the synthesis of GMP from XMP. This is GMP synthase [glutamine-hydrolyzing] subunit A from Methanococcus maripaludis (strain C5 / ATCC BAA-1333).